A 264-amino-acid polypeptide reads, in one-letter code: Small ribosomal subunit protein eS1 (264 aa).

An N6-acetyllysine; alternate modification is found at K34. A Glycyl lysine isopeptide (Lys-Gly) (interchain with G-Cter in SUMO2); alternate cross-link involves residue K34. K56 is subject to N6-acetyllysine. Residue Y155 is modified to ADP-ribosyltyrosine. The tract at residues 232–264 is disordered; the sequence is HGEGSSSGKATGDETGAKVERADGYEPPVQESV. S236 and S237 each carry phosphoserine. Residues 242–255 are compositionally biased toward basic and acidic residues; it reads TGDETGAKVERADG. N6-acetyllysine; alternate is present on K249. K249 participates in a covalent cross-link: Glycyl lysine isopeptide (Lys-Gly) (interchain with G-Cter in SUMO2); alternate. Y256 is subject to Phosphotyrosine. S263 is modified (phosphoserine).

This sequence belongs to the eukaryotic ribosomal protein eS1 family. Component of the small ribosomal subunit. Mature ribosomes consist of a small (40S) and a large (60S) subunit. The 40S subunit contains about 33 different proteins and 1 molecule of RNA (18S). The 60S subunit contains about 49 different proteins and 3 molecules of RNA (28S, 5.8S and 5S). Identified in a IGF2BP1-dependent mRNP granule complex containing untranslated mRNAs. Binds with high affinity to IPO4. Interacts with DDIT3. Part of the small subunit (SSU) processome, composed of more than 70 proteins and the RNA chaperone small nucleolar RNA (snoRNA) U3. ADP-ribosylated at Tyr-155 by PARP1 in presence of HPF1.

The protein localises to the cytoplasm. Its subcellular location is the nucleus. It localises to the nucleolus. Functionally, component of the small ribosomal subunit. The ribosome is a large ribonucleoprotein complex responsible for the synthesis of proteins in the cell. Part of the small subunit (SSU) processome, first precursor of the small eukaryotic ribosomal subunit. During the assembly of the SSU processome in the nucleolus, many ribosome biogenesis factors, an RNA chaperone and ribosomal proteins associate with the nascent pre-rRNA and work in concert to generate RNA folding, modifications, rearrangements and cleavage as well as targeted degradation of pre-ribosomal RNA by the RNA exosome. May play a role during erythropoiesis through regulation of transcription factor DDIT3. The protein is Small ribosomal subunit protein eS1 of Bos taurus (Bovine).